We begin with the raw amino-acid sequence, 123 residues long: Large ribosomal subunit protein uL29 (123 aa).

It belongs to the universal ribosomal protein uL29 family.

The protein is Large ribosomal subunit protein uL29 (RPL35) of Babesia bovis.